A 197-amino-acid chain; its full sequence is V-type ATP synthase subunit E 2 (197 aa).

Belongs to the V-ATPase E subunit family.

Functionally, produces ATP from ADP in the presence of a proton gradient across the membrane. The chain is V-type ATP synthase subunit E 2 from Clostridium tetani (strain Massachusetts / E88).